The sequence spans 384 residues: Chaperone protein DnaJ (384 aa).

Residues 6-71 (DYYEVLGISK…TKRKTYDQFG (66 aa)) form the J domain. Residues 141 to 223 (GKKMSIKVNR…CHGTGNTRKV (83 aa)) form a CR-type zinc finger. Zn(2+) is bound by residues cysteine 154, cysteine 157, cysteine 171, cysteine 174, cysteine 197, cysteine 200, cysteine 211, and cysteine 214. CXXCXGXG motif repeat units follow at residues 154–161 (CEECNGTG), 171–178 (CSTCNGTG), 197–204 (CSACNGTG), and 211–218 (CSKCHGTG).

The protein belongs to the DnaJ family. As to quaternary structure, homodimer. Zn(2+) is required as a cofactor.

Its subcellular location is the cytoplasm. In terms of biological role, participates actively in the response to hyperosmotic and heat shock by preventing the aggregation of stress-denatured proteins and by disaggregating proteins, also in an autonomous, DnaK-independent fashion. Unfolded proteins bind initially to DnaJ; upon interaction with the DnaJ-bound protein, DnaK hydrolyzes its bound ATP, resulting in the formation of a stable complex. GrpE releases ADP from DnaK; ATP binding to DnaK triggers the release of the substrate protein, thus completing the reaction cycle. Several rounds of ATP-dependent interactions between DnaJ, DnaK and GrpE are required for fully efficient folding. Also involved, together with DnaK and GrpE, in the DNA replication of plasmids through activation of initiation proteins. This Clostridioides difficile (strain 630) (Peptoclostridium difficile) protein is Chaperone protein DnaJ.